Consider the following 444-residue polypeptide: MEGENWRVAPGGALHGEARVPGDKSISHRAVMLGALADGTTRITGMLEGADVLATIDVFRALGVAIEGPEQGAVTVHGVGWEGLRPPARELDVGNSGTSMRLLAGLLAGLPFDTVLTGDASLNRRPMRRVTEPLAEMGARITTSDAGTAPLRIHGGSPLAGIDYTLPVASAQVKSALLLAGMRAEGHTCVTEPAPTRDHTERMLQGFGYPVSRDLATVCLEGGRRLYGTGVDVPADISSAAFLLVAASIAPGSDLTLRHVGWNPTRTGVVEILRRMGADIEVLSTDEVGGEPVADLRVRSAALRGIAIPEELVPLAIDEFPALFIAAACAEGETQLTGAAELRVKESDRIAVMAEGLQTLGVTVEPREDGVRIVGQPVLGGGRVHSHTDHRIAMAFAVAALRAEAPVEIEACENVRTSFPGFVELLRRLGMGVEVDGPHDRGTA.

3 residues coordinate 3-phosphoshikimate: lysine 24, serine 25, and arginine 29. Lysine 24 provides a ligand contact to phosphoenolpyruvate. Residues glycine 97 and arginine 125 each contribute to the phosphoenolpyruvate site. 4 residues coordinate 3-phosphoshikimate: serine 170, glutamine 172, aspartate 318, and lysine 345. Glutamine 172 contacts phosphoenolpyruvate. Aspartate 318 acts as the Proton acceptor in catalysis. 2 residues coordinate phosphoenolpyruvate: arginine 349 and arginine 391.

The protein belongs to the EPSP synthase family. As to quaternary structure, monomer.

The protein localises to the cytoplasm. It carries out the reaction 3-phosphoshikimate + phosphoenolpyruvate = 5-O-(1-carboxyvinyl)-3-phosphoshikimate + phosphate. It participates in metabolic intermediate biosynthesis; chorismate biosynthesis; chorismate from D-erythrose 4-phosphate and phosphoenolpyruvate: step 6/7. In terms of biological role, catalyzes the transfer of the enolpyruvyl moiety of phosphoenolpyruvate (PEP) to the 5-hydroxyl of shikimate-3-phosphate (S3P) to produce enolpyruvyl shikimate-3-phosphate and inorganic phosphate. The protein is 3-phosphoshikimate 1-carboxyvinyltransferase of Halorhodospira halophila (strain DSM 244 / SL1) (Ectothiorhodospira halophila (strain DSM 244 / SL1)).